The sequence spans 488 residues: Glutamyl-tRNA(Gln) amidotransferase subunit A (488 aa).

Active-site charge relay system residues include lysine 77 and serine 152. Serine 176 functions as the Acyl-ester intermediate in the catalytic mechanism.

The protein belongs to the amidase family. GatA subfamily. Heterotrimer of A, B and C subunits.

It catalyses the reaction L-glutamyl-tRNA(Gln) + L-glutamine + ATP + H2O = L-glutaminyl-tRNA(Gln) + L-glutamate + ADP + phosphate + H(+). Its function is as follows. Allows the formation of correctly charged Gln-tRNA(Gln) through the transamidation of misacylated Glu-tRNA(Gln) in organisms which lack glutaminyl-tRNA synthetase. The reaction takes place in the presence of glutamine and ATP through an activated gamma-phospho-Glu-tRNA(Gln). The chain is Glutamyl-tRNA(Gln) amidotransferase subunit A from Streptococcus pyogenes serotype M18 (strain MGAS8232).